The sequence spans 166 residues: Dihydrofolate reductase (166 aa).

One can recognise a DHFR domain in the interval 6–164 (KISLIVAMDK…YDYYFHIYER (159 aa)). 10–12 (IVA) lines the substrate pocket. NADP(+)-binding positions include 11–12 (VA) and 19–24 (IGKDND). Asp32 is a binding site for substrate. 48–51 (GRKN) provides a ligand contact to NADP(+). Residue Arg62 participates in substrate binding. NADP(+) is bound by residues 67 to 70 (LTRD) and 100 to 105 (FGGEQI). Residue Thr119 coordinates substrate.

It belongs to the dihydrofolate reductase family.

It carries out the reaction (6S)-5,6,7,8-tetrahydrofolate + NADP(+) = 7,8-dihydrofolate + NADPH + H(+). Its pathway is cofactor biosynthesis; tetrahydrofolate biosynthesis; 5,6,7,8-tetrahydrofolate from 7,8-dihydrofolate: step 1/1. Functionally, key enzyme in folate metabolism. Catalyzes an essential reaction for de novo glycine and purine synthesis, and for DNA precursor synthesis. In Staphylococcus haemolyticus, this protein is Dihydrofolate reductase (dfrD).